The sequence spans 380 residues: Mitogen-activated protein kinase 3 (380 aa).

N-acetylalanine is present on Ala2. Positions 43 to 331 constitute a Protein kinase domain; the sequence is YTQLQYIGEG…VEEALAHPYL (289 aa). Residues 49-57 and Lys72 each bind ATP; that span reads IGEGAYGMV. Residue Asp167 is the Proton acceptor of the active site. Thr199 is subject to Phosphothreonine. Thr203 carries the post-translational modification Phosphothreonine; by MAP2K1 and MAP2K2. The TXY motif lies at 203–205; that stretch reads TEY. Tyr205 is modified (phosphotyrosine; by MAP2K1 and MAP2K2). Thr208 is subject to Phosphothreonine; by autocatalysis.

Belongs to the protein kinase superfamily. CMGC Ser/Thr protein kinase family. MAP kinase subfamily. In terms of assembly, binds both upstream activators and downstream substrates in multimolecular complexes. Found in a complex with at least BRAF, HRAS, MAP2K1/MEK1, MAPK3 and RGS14. Interacts with TPR. Interacts with ADAM15, ARRB2, CANX, DAPK1 (via death domain), HSF4, IER3, MAP2K1/MEK1, NISCH, and SGK1. Interacts with MORG1. Interacts with PEA15. Interacts with isoform 1 of MKNK2 and this binding prevents from dephosphorylation and inactivation. Interacts with CDKN2AIP. Interacts with HSF1 (via D domain and preferentially with hyperphosphorylated form); this interaction occurs upon heat shock. Interacts with CAVIN4. Interacts with GIT1; this interaction is necessary for MAPK3 localization to focal adhesions. Interacts with ZNF263. Interacts with EBF4. It depends on Mg(2+) as a cofactor. Dually phosphorylated on Thr-203 and Tyr-205, which activates the enzyme. Ligand-activated ALK induces tyrosine phosphorylation. Dephosphorylated by PTPRJ at Tyr-205. Autophosphorylated on threonine and tyrosine residues in vitro. Phosphorylated upon FLT3 and KIT signaling. Post-translationally, ubiquitinated by TRIM15 via 'Lys-63'-linked ubiquitination; leading to activation. Deubiquitinated by CYLD.

The protein localises to the cytoplasm. It localises to the nucleus. Its subcellular location is the membrane. The protein resides in the caveola. It is found in the cell junction. The protein localises to the focal adhesion. The catalysed reaction is L-seryl-[protein] + ATP = O-phospho-L-seryl-[protein] + ADP + H(+). The enzyme catalyses L-threonyl-[protein] + ATP = O-phospho-L-threonyl-[protein] + ADP + H(+). Its activity is regulated as follows. Phosphorylated by MAP2K1/MEK1 and MAP2K2/MEK2 on Thr-203 and Tyr-205 in response to external stimuli like insulin or NGF. Both phosphorylations are required for activity. This phosphorylation causes dramatic conformational changes, which enable full activation and interaction of MAPK1/ERK2 with its substrates. Dephosphorylated and inactivated by DUSP3, DUSP6 and DUSP9. Its function is as follows. Serine/threonine kinase which acts as an essential component of the MAP kinase signal transduction pathway. MAPK1/ERK2 and MAPK3/ERK1 are the 2 MAPKs which play an important role in the MAPK/ERK cascade. They participate also in a signaling cascade initiated by activated KIT and KITLG/SCF. Depending on the cellular context, the MAPK/ERK cascade mediates diverse biological functions such as cell growth, adhesion, survival and differentiation through the regulation of transcription, translation, cytoskeletal rearrangements. The MAPK/ERK cascade also plays a role in initiation and regulation of meiosis, mitosis, and postmitotic functions in differentiated cells by phosphorylating a number of transcription factors. About 160 substrates have already been discovered for ERKs. Many of these substrates are localized in the nucleus, and seem to participate in the regulation of transcription upon stimulation. However, other substrates are found in the cytosol as well as in other cellular organelles, and those are responsible for processes such as translation, mitosis and apoptosis. Moreover, the MAPK/ERK cascade is also involved in the regulation of the endosomal dynamics, including lysosome processing and endosome cycling through the perinuclear recycling compartment (PNRC); as well as in the fragmentation of the Golgi apparatus during mitosis. The substrates include transcription factors (such as ATF2, BCL6, ELK1, ERF, FOS, HSF4 or SPZ1), cytoskeletal elements (such as CANX, CTTN, GJA1, MAP2, MAPT, PXN, SORBS3 or STMN1), regulators of apoptosis (such as BAD, BTG2, CASP9, DAPK1, IER3, MCL1 or PPARG), regulators of translation (such as EIF4EBP1) and a variety of other signaling-related molecules (like ARHGEF2, DEPTOR, FRS2 or GRB10). Protein kinases (such as RAF1, RPS6KA1/RSK1, RPS6KA3/RSK2, RPS6KA2/RSK3, RPS6KA6/RSK4, SYK, MKNK1/MNK1, MKNK2/MNK2, RPS6KA5/MSK1, RPS6KA4/MSK2, MAPKAPK3 or MAPKAPK5) and phosphatases (such as DUSP1, DUSP4, DUSP6 or DUSP16) are other substrates which enable the propagation the MAPK/ERK signal to additional cytosolic and nuclear targets, thereby extending the specificity of the cascade. The polypeptide is Mitogen-activated protein kinase 3 (Mapk3) (Mus musculus (Mouse)).